A 96-amino-acid chain; its full sequence is Prokineticin Bo8 (96 aa).

The signal sequence occupies residues 1–19 (MKCFAQIVVLLLVIAFSHG). Intrachain disulfides connect Cys-26–Cys-38, Cys-32–Cys-50, Cys-37–Cys-78, Cys-60–Cys-86, and Cys-80–Cys-95.

Expressed by the skin glands.

The protein localises to the secreted. Functionally, potent agonist for both PKR1/PROKR1 and PKR2/PROKR2, and inducer of a potent and long-lasting hyperalgesia. Also potentiates capsaicin-induced TRPV1 current, when tested on DRG neurons. At subnanomolar concentrations, this protein both induces potent chemotaxis of macrophages and stimulates LPS-induced production of the pro-inflammatory cytokines IL-1 and IL-12. In vivo, potently stimulates the contraction of the guinea-pig gastrointestinal (GI) smooth muscle (nanomolar concentration). The protein is Prokineticin Bo8 of Bombina orientalis (Oriental fire-bellied toad).